We begin with the raw amino-acid sequence, 131 residues long: Protein yippee-like PJ691.02 (131 aa).

The Yippee domain maps to R12–R109. Zn(2+) is bound by residues C16, C19, C72, and C75.

The protein belongs to the yippee family.

The protein is Protein yippee-like PJ691.02 of Schizosaccharomyces pombe (strain 972 / ATCC 24843) (Fission yeast).